We begin with the raw amino-acid sequence, 321 residues long: Pirin-like protein 2 (321 aa).

4 residues coordinate Fe cation: H88, H90, H132, and E134.

Belongs to the pirin family. As to quaternary structure, interacts with RD21A, RD21B and XCP2.

It is found in the cytoplasm. It localises to the cytosol. Its subcellular location is the nucleus. Involved in susceptibility to the bacterial plant pathogen Ralstonia solanacearum. Stabilizes the xylem cysteine protease XCP2 by blocking its autolysis. This is Pirin-like protein 2 from Arabidopsis thaliana (Mouse-ear cress).